The sequence spans 377 residues: Transmembrane 6 superfamily member 2 (377 aa).

The next 9 helical transmembrane spans lie at 10–30 (IAALSLSALPVSYALNHVSAL), 34–54 (LWVALMSALILGLLFVAVYSL), 63–83 (PLYAVFAVFAFTSVVDLIIAL), 111–131 (FICYWDGTVHYLLYLAMAGAI), 140–160 (FGLYWLGSFAMSILVFLTGNI), 170–190 (PAFFLTIPYLLVPCWAGMKVF), 219–239 (LALVIYLILAGFFTLFRGLVV), 269–289 (MLMYMFYVLPFCGLAAYALTF), and 332–352 (TWGCFFVCNLLYALGPHLLAY). 2 consecutive EXPERA domains span residues 61–186 (YDPL…CWAG) and 217–351 (ADLA…HLLA).

Belongs to the TM6SF family. Substantial expression in liver and intestine, whereas all other tissues analyzed show low levels.

It localises to the endoplasmic reticulum membrane. It is found in the endoplasmic reticulum-Golgi intermediate compartment membrane. Its function is as follows. Regulator of liver fat metabolism influencing triglyceride secretion and hepatic lipid droplet content. May function as sterol isomerase. This is Transmembrane 6 superfamily member 2 (TM6SF2) from Homo sapiens (Human).